Reading from the N-terminus, the 469-residue chain is GTPase Der (469 aa).

EngA-type G domains are found at residues 3–167 (PTLV…PEEE) and 176–349 (PKIA…AAAF). GTP is bound by residues 9 to 16 (GRPNVGKS), 56 to 60 (DTGGL), 119 to 122 (NKAE), 182 to 189 (GRPNVGKS), 229 to 233 (DTAGV), and 294 to 297 (NKWD). The KH-like domain occupies 350–436 (IKLSTPKLTR…RIQIKEDEGK (87 aa)). Residues 432 to 443 (EDEGKNPFEGKK) are compositionally biased toward basic and acidic residues. A disordered region spans residues 432 to 469 (EDEGKNPFEGKKRAPLSESEATRMRRKKRVRRKVYGAD). The segment covering 455–469 (MRRKKRVRRKVYGAD) has biased composition (basic residues).

Belongs to the TRAFAC class TrmE-Era-EngA-EngB-Septin-like GTPase superfamily. EngA (Der) GTPase family. Associates with the 50S ribosomal subunit.

Its function is as follows. GTPase that plays an essential role in the late steps of ribosome biogenesis. This Thiobacillus denitrificans (strain ATCC 25259 / T1) protein is GTPase Der.